Consider the following 379-residue polypeptide: Fructose-1,6-bisphosphate aldolase/phosphatase (379 aa).

The Proton acceptor; for FBP phosphatase activity role is filled by Asp-13. The Mg(2+) site is built by Asp-13, His-20, Asp-51, and Asp-52. His-20 is a binding site for beta-D-fructose 1,6-bisphosphate. His-20 serves as a coordination point for dihydroxyacetone phosphate. Tyr-89 contributes to the beta-D-fructose 1,6-bisphosphate binding site. Gln-93 is a binding site for Mg(2+). Residue Gly-102–Asn-103 participates in beta-D-fructose 1,6-bisphosphate binding. Residue Asp-130 participates in Mg(2+) binding. A beta-D-fructose 1,6-bisphosphate-binding site is contributed by Lys-131. Lys-131 serves as a coordination point for dihydroxyacetone phosphate. Tyr-227 functions as the Proton donor/acceptor; for FBP aldolase activity in the catalytic mechanism. Mg(2+)-binding residues include Lys-230, Asp-231, and Asp-232. Catalysis depends on Lys-230, which acts as the Schiff-base intermediate with DHAP; for FBP aldolase activity. Beta-D-fructose 1,6-bisphosphate contacts are provided by residues Gln-240–Ser-241, Arg-264, Asp-285, and Tyr-346. Dihydroxyacetone phosphate contacts are provided by Arg-264 and Asp-285.

It belongs to the FBP aldolase/phosphatase family. Homooctamer; dimer of tetramers. The cofactor is Mg(2+).

The catalysed reaction is beta-D-fructose 1,6-bisphosphate + H2O = beta-D-fructose 6-phosphate + phosphate. It catalyses the reaction beta-D-fructose 1,6-bisphosphate = D-glyceraldehyde 3-phosphate + dihydroxyacetone phosphate. Its pathway is carbohydrate biosynthesis; gluconeogenesis. Its function is as follows. Catalyzes two subsequent steps in gluconeogenesis: the aldol condensation of dihydroxyacetone phosphate (DHAP) and glyceraldehyde-3-phosphate (GA3P) to fructose-1,6-bisphosphate (FBP), and the dephosphorylation of FBP to fructose-6-phosphate (F6P). The sequence is that of Fructose-1,6-bisphosphate aldolase/phosphatase from Moorella thermoacetica (strain ATCC 39073 / JCM 9320).